A 109-amino-acid chain; its full sequence is Iron-sulfur cluster assembly protein CyaY (109 aa).

This sequence belongs to the frataxin family.

In terms of biological role, involved in iron-sulfur (Fe-S) cluster assembly. May act as a regulator of Fe-S biogenesis. The chain is Iron-sulfur cluster assembly protein CyaY from Bordetella avium (strain 197N).